Consider the following 179-residue polypeptide: ADP-ribosylation factor-like protein 5A (179 aa).

A lipid anchor (N-myristoyl glycine) is attached at Gly2. Residues 23–30 (GLDNAGKT), 66–70 (DIGGQ), 125–128 (NKQD), and Ala159 contribute to the GTP site.

The protein belongs to the small GTPase superfamily. Arf family.

In terms of biological role, lacks ADP-ribosylation enhancing activity. This is ADP-ribosylation factor-like protein 5A (Arl5a) from Mus musculus (Mouse).